A 179-amino-acid chain; its full sequence is MSAKRSLKLDSVKKYNPVEASPLAKKKDLNSYSPTTGTCQISPFSSPTSHNAEDLRNGLSHGDETNSESRLSRRGQPQTAEDAFAELQSNVKSSLVRILKARENLTSLQALEGSRELENIIGVSDSSHILSAEVQKTQALMSQAEELQLLKRNHGQLPAREYAQPASSSAFLQLLLNSL.

Residues 1–79 (MSAKRSLKLD…RLSRRGQPQT (79 aa)) form a disordered region. The span at 30–50 (NSYSPTTGTCQISPFSSPTSH) shows a compositional bias: polar residues. Positions 51-64 (NAEDLRNGLSHGDE) are enriched in basic and acidic residues. An LXXLL motif motif is present at residues 172–176 (LQLLL).

It is found in the nucleus. Its subcellular location is the chromosome. The protein resides in the centromere. It localises to the kinetochore. Transcription coregulator that can have both coactivator and corepressor functions. Involved in the coactivation of nuclear receptors for retinoid X (RXRs) and thyroid hormone (TRs) in a ligand-dependent fashion. Probable component of a centromeric complex involved in assembly of kinetochore proteins, mitotic progression and chromosome segregation. This chain is Centromere protein R (CENPR), found in Gallus gallus (Chicken).